The primary structure comprises 261 residues: tRNA pseudouridine synthase A (261 aa).

The active-site Nucleophile is the Asp-51. Tyr-109 provides a ligand contact to substrate.

It belongs to the tRNA pseudouridine synthase TruA family. As to quaternary structure, homodimer.

The catalysed reaction is uridine(38/39/40) in tRNA = pseudouridine(38/39/40) in tRNA. In terms of biological role, formation of pseudouridine at positions 38, 39 and 40 in the anticodon stem and loop of transfer RNAs. The chain is tRNA pseudouridine synthase A from Shewanella piezotolerans (strain WP3 / JCM 13877).